Consider the following 417-residue polypeptide: Tyrosine--tRNA ligase (417 aa).

Position 39 (Tyr39) interacts with L-tyrosine. A 'HIGH' region motif is present at residues 44–53 (CTAPSLHVGH). The L-tyrosine site is built by Tyr176 and Gln180. The short motif at 236 to 240 (KMGKT) is the 'KMSKS' region element. Lys239 is a binding site for ATP. The S4 RNA-binding domain occupies 350 to 417 (AGVLALFVKA…KKRHVLLRPA (68 aa)).

The protein belongs to the class-I aminoacyl-tRNA synthetase family. TyrS type 1 subfamily. Homodimer.

Its subcellular location is the cytoplasm. The catalysed reaction is tRNA(Tyr) + L-tyrosine + ATP = L-tyrosyl-tRNA(Tyr) + AMP + diphosphate + H(+). Its function is as follows. Catalyzes the attachment of tyrosine to tRNA(Tyr) in a two-step reaction: tyrosine is first activated by ATP to form Tyr-AMP and then transferred to the acceptor end of tRNA(Tyr). The polypeptide is Tyrosine--tRNA ligase (Nitrobacter winogradskyi (strain ATCC 25391 / DSM 10237 / CIP 104748 / NCIMB 11846 / Nb-255)).